Here is a 292-residue protein sequence, read N- to C-terminus: Phosphatidylserine decarboxylase proenzyme (292 aa).

Active-site charge relay system; for autoendoproteolytic cleavage activity residues include aspartate 92, histidine 149, and serine 255. Catalysis depends on serine 255, which acts as the Schiff-base intermediate with substrate; via pyruvic acid; for decarboxylase activity. Pyruvic acid (Ser); by autocatalysis is present on serine 255.

The protein belongs to the phosphatidylserine decarboxylase family. PSD-B subfamily. Prokaryotic type I sub-subfamily. As to quaternary structure, heterodimer of a large membrane-associated beta subunit and a small pyruvoyl-containing alpha subunit. Requires pyruvate as cofactor. In terms of processing, is synthesized initially as an inactive proenzyme. Formation of the active enzyme involves a self-maturation process in which the active site pyruvoyl group is generated from an internal serine residue via an autocatalytic post-translational modification. Two non-identical subunits are generated from the proenzyme in this reaction, and the pyruvate is formed at the N-terminus of the alpha chain, which is derived from the carboxyl end of the proenzyme. The autoendoproteolytic cleavage occurs by a canonical serine protease mechanism, in which the side chain hydroxyl group of the serine supplies its oxygen atom to form the C-terminus of the beta chain, while the remainder of the serine residue undergoes an oxidative deamination to produce ammonia and the pyruvoyl prosthetic group on the alpha chain. During this reaction, the Ser that is part of the protease active site of the proenzyme becomes the pyruvoyl prosthetic group, which constitutes an essential element of the active site of the mature decarboxylase.

The protein localises to the cell membrane. It catalyses the reaction a 1,2-diacyl-sn-glycero-3-phospho-L-serine + H(+) = a 1,2-diacyl-sn-glycero-3-phosphoethanolamine + CO2. It participates in phospholipid metabolism; phosphatidylethanolamine biosynthesis; phosphatidylethanolamine from CDP-diacylglycerol: step 2/2. Catalyzes the formation of phosphatidylethanolamine (PtdEtn) from phosphatidylserine (PtdSer). The sequence is that of Phosphatidylserine decarboxylase proenzyme from Idiomarina loihiensis (strain ATCC BAA-735 / DSM 15497 / L2-TR).